The following is a 116-amino-acid chain: S-adenosylmethionine decarboxylase proenzyme (116 aa).

Serine 63 acts as the Schiff-base intermediate with substrate; via pyruvic acid in catalysis. Position 63 is a pyruvic acid (Ser); by autocatalysis (serine 63). The Proton acceptor; for processing activity role is filled by histidine 68. The active-site Proton donor; for catalytic activity is the cysteine 83.

Belongs to the prokaryotic AdoMetDC family. Type 1 subfamily. In terms of assembly, heterotetramer of two alpha and two beta chains arranged as a dimer of alpha/beta heterodimers. It depends on pyruvate as a cofactor. Is synthesized initially as an inactive proenzyme. Formation of the active enzyme involves a self-maturation process in which the active site pyruvoyl group is generated from an internal serine residue via an autocatalytic post-translational modification. Two non-identical subunits are generated from the proenzyme in this reaction, and the pyruvate is formed at the N-terminus of the alpha chain, which is derived from the carboxyl end of the proenzyme. The post-translation cleavage follows an unusual pathway, termed non-hydrolytic serinolysis, in which the side chain hydroxyl group of the serine supplies its oxygen atom to form the C-terminus of the beta chain, while the remainder of the serine residue undergoes an oxidative deamination to produce ammonia and the pyruvoyl group blocking the N-terminus of the alpha chain.

It catalyses the reaction S-adenosyl-L-methionine + H(+) = S-adenosyl 3-(methylsulfanyl)propylamine + CO2. Its pathway is amine and polyamine biosynthesis; S-adenosylmethioninamine biosynthesis; S-adenosylmethioninamine from S-adenosyl-L-methionine: step 1/1. In terms of biological role, catalyzes the decarboxylation of S-adenosylmethionine to S-adenosylmethioninamine (dcAdoMet), the propylamine donor required for the synthesis of the polyamines spermine and spermidine from the diamine putrescine. The protein is S-adenosylmethionine decarboxylase proenzyme of Clostridium botulinum (strain ATCC 19397 / Type A).